A 270-amino-acid polypeptide reads, in one-letter code: uncharacterized protein (270 aa).

The region spanning 34-266 (LIARGLTKSY…PDVRRLYLGD (233 aa)) is the ABC transporter domain. 66–73 (GPNGAGKT) lines the ATP pocket.

Belongs to the ABC transporter superfamily.

This is an uncharacterized protein from Rhizobium meliloti (strain 1021) (Ensifer meliloti).